The sequence spans 347 residues: UDP-N-acetylenolpyruvoylglucosamine reductase (347 aa).

An FAD-binding PCMH-type domain is found at 27–197 (LPARAQRLAR…TGIELRLNKM (171 aa)). Arginine 173 is a catalytic residue. Serine 247 serves as the catalytic Proton donor. Glutamate 342 is an active-site residue.

It belongs to the MurB family. FAD serves as cofactor.

The protein resides in the cytoplasm. It catalyses the reaction UDP-N-acetyl-alpha-D-muramate + NADP(+) = UDP-N-acetyl-3-O-(1-carboxyvinyl)-alpha-D-glucosamine + NADPH + H(+). The protein operates within cell wall biogenesis; peptidoglycan biosynthesis. Its function is as follows. Cell wall formation. The chain is UDP-N-acetylenolpyruvoylglucosamine reductase from Alcanivorax borkumensis (strain ATCC 700651 / DSM 11573 / NCIMB 13689 / SK2).